A 416-amino-acid polypeptide reads, in one-letter code: uncharacterized protein (416 aa).

Positions 341–360 (EDREKGSQHTNNTHHHKRNL) are disordered.

This is an uncharacterized protein from Human cytomegalovirus (strain AD169) (HHV-5).